The primary structure comprises 299 residues: dTDP-4-dehydrorhamnose reductase (299 aa).

Residues 10 to 12 (GQV), aspartate 30, 39 to 40 (DF), and 63 to 65 (AHT) each bind NADH. 11–12 (QV) provides a ligand contact to NADPH. NADPH-binding positions include 39–40 (DF), 63–65 (AHT), and tyrosine 102. A dTDP-beta-L-rhamnose-binding site is contributed by 104 to 105 (TD). Residues tyrosine 128 and lysine 132 each contribute to the NADH site. NADPH contacts are provided by tyrosine 128 and lysine 132. Tyrosine 128 serves as the catalytic Proton donor/acceptor. Tryptophan 153 provides a ligand contact to dTDP-beta-L-rhamnose.

This sequence belongs to the dTDP-4-dehydrorhamnose reductase family. Homodimer. Requires Mg(2+) as cofactor.

The catalysed reaction is dTDP-beta-L-rhamnose + NADP(+) = dTDP-4-dehydro-beta-L-rhamnose + NADPH + H(+). Its pathway is carbohydrate biosynthesis; dTDP-L-rhamnose biosynthesis. It participates in bacterial outer membrane biogenesis; LPS O-antigen biosynthesis. Its function is as follows. Involved in the biosynthesis of the dTDP-L-rhamnose which is an important component of lipopolysaccharide (LPS). Catalyzes the reduction of dTDP-6-deoxy-L-lyxo-4-hexulose to yield dTDP-L-rhamnose. RmlD uses NADH and NADPH nearly equally well. In Salmonella typhimurium (strain LT2 / SGSC1412 / ATCC 700720), this protein is dTDP-4-dehydrorhamnose reductase (rfbD).